We begin with the raw amino-acid sequence, 557 residues long: MFSDIEIARQAKLRKISEIAAELGLNEDSITLYGQYKAKIDLNANPQLQAQPDGKLILVTAISPSPAGEGKTTTTVGLGDALQRMGKRAVICLREPSMGPVFGMKGGAAGGGYAQVVPMEDINLHFTGDFASIALAHNLLAAMIDNHIHHGNALQIDPRQVTWKRVIDMNDRALRQVVIGLGGKVNGQPREDGFDIVVASEVMAVFCLADSLKDLRTRLGRIVVGYTYSGQPVTAQDLKAHGAMTVLLKDAIKPNLVQTLEHTPALLHGGPFANIAHGCNSVIATRTALKLGDYVVTEAGFGADLGAEKFIDIKCRKAGLHPDACVIVATIRALKYHGGADVSALSREDMLALDRGIANLEKHVENVTTHYGMPAVIALNRFDHDTEAELALVMKRMGEMGIKVVVAEHWAKGGAGAESLAAHVLQLIEGRSEGVRYVYESSETLWEKVNQVARKIYGAMDVHAPRPVRAMIDRLQDAGYGHYPICIAKTQYSFSTDASRRGVPHEHILTVRAVRLCAGAEFVVIICDDIMTMPGLPEEPCAIRMDIDDDGQVVGLY.

65–72 (SPAGEGKT) provides a ligand contact to ATP.

This sequence belongs to the formate--tetrahydrofolate ligase family.

The catalysed reaction is (6S)-5,6,7,8-tetrahydrofolate + formate + ATP = (6R)-10-formyltetrahydrofolate + ADP + phosphate. It functions in the pathway one-carbon metabolism; tetrahydrofolate interconversion. The protein is Formate--tetrahydrofolate ligase of Methylobacillus flagellatus (strain ATCC 51484 / DSM 6875 / VKM B-1610 / KT).